A 203-amino-acid chain; its full sequence is Octanoyltransferase (203 aa).

The BPL/LPL catalytic domain maps to E30–V203. Residues R69–H76, S135–G137, and G148–S150 each bind substrate. C166 functions as the Acyl-thioester intermediate in the catalytic mechanism.

Belongs to the LipB family.

It is found in the cytoplasm. The catalysed reaction is octanoyl-[ACP] + L-lysyl-[protein] = N(6)-octanoyl-L-lysyl-[protein] + holo-[ACP] + H(+). It participates in protein modification; protein lipoylation via endogenous pathway; protein N(6)-(lipoyl)lysine from octanoyl-[acyl-carrier-protein]: step 1/2. Catalyzes the transfer of endogenously produced octanoic acid from octanoyl-acyl-carrier-protein onto the lipoyl domains of lipoate-dependent enzymes. Lipoyl-ACP can also act as a substrate although octanoyl-ACP is likely to be the physiological substrate. The chain is Octanoyltransferase from Persephonella marina (strain DSM 14350 / EX-H1).